The following is a 1035-amino-acid chain: Enteropeptidase (1035 aa).

The N-myristoyl glycine moiety is linked to residue Gly-2. The Cytoplasmic segment spans residues Gly-2 to Glu-18. A helical; Signal-anchor for type II membrane protein membrane pass occupies residues Val-19–Val-47. The Extracellular segment spans residues Lys-48–His-1035. An SEA domain is found at Lys-54–Glu-169. N-linked (GlcNAc...) asparagine glycosylation is found at Asn-116, Asn-147, Asn-170, and Asn-194. The LDL-receptor class A 1 domain occupies Ile-197 to Thr-238. 4 disulfides stabilise this stretch: Cys-199/Cys-212, Cys-206/Cys-225, Cys-219/Cys-236, and Cys-240/Cys-269. N-linked (GlcNAc...) asparagine glycosylation is found at Asn-233, Asn-263, Asn-264, Asn-404, Asn-456, Asn-486, Asn-519, Asn-550, and Asn-646. The region spanning Cys-240–Phe-350 is the CUB 1 domain. The MAM domain maps to Tyr-358–Val-520. Cysteines 540 and 568 form a disulfide. Residues Cys-540–Gly-650 enclose the CUB 2 domain. The 39-residue stretch at Glu-657–Arg-695 folds into the LDL-receptor class A 2 domain. 3 cysteine pairs are disulfide-bonded: Cys-659-Cys-671, Cys-666-Cys-684, and Cys-678-Cys-693. The SRCR domain maps to Val-694 to Ser-787. Asn-698, Asn-722, Asn-741, and Asn-762 each carry an N-linked (GlcNAc...) asparagine glycan. 6 disulfides stabilise this stretch: Cys-773–Cys-783, Cys-788–Cys-912, Cys-826–Cys-842, Cys-926–Cys-993, Cys-957–Cys-972, and Cys-983–Cys-1011. Positions Ile-801–His-1035 constitute a Peptidase S1 domain. His-841 functions as the Charge relay system in the catalytic mechanism. An N-linked (GlcNAc...) asparagine glycan is attached at Asn-864. The active-site Charge relay system is the Asp-892. Asn-903 and Asn-965 each carry an N-linked (GlcNAc...) asparagine glycan. Ser-987 acts as the Charge relay system in catalysis.

The protein belongs to the peptidase S1 family. Heterodimer of a catalytic (light) chain and a multidomain (heavy) chain linked by a disulfide bond. Post-translationally, the chains are derived from a single precursor that is cleaved by a trypsin-like protease. In terms of tissue distribution, intestinal brush border.

The protein resides in the membrane. The enzyme catalyses Activation of trypsinogen by selective cleavage of 6-Lys-|-Ile-7 bond.. Functionally, responsible for initiating activation of pancreatic proteolytic proenzymes (trypsin, chymotrypsin and carboxypeptidase A). It catalyzes the conversion of trypsinogen to trypsin which in turn activates other proenzymes including chymotrypsinogen, procarboxypeptidases, and proelastases. The polypeptide is Enteropeptidase (TMPRSS15) (Bos taurus (Bovine)).